The chain runs to 372 residues: Glutamate 5-kinase (372 aa).

Lys6 is an ATP binding site. 3 residues coordinate substrate: Ser46, Asp133, and Asn145. ATP is bound by residues Thr165–Asp166 and Thr207–Lys213. A PUA domain is found at Asn272–Lys350.

This sequence belongs to the glutamate 5-kinase family.

It is found in the cytoplasm. The catalysed reaction is L-glutamate + ATP = L-glutamyl 5-phosphate + ADP. It participates in amino-acid biosynthesis; L-proline biosynthesis; L-glutamate 5-semialdehyde from L-glutamate: step 1/2. Functionally, catalyzes the transfer of a phosphate group to glutamate to form L-glutamate 5-phosphate. This is Glutamate 5-kinase from Caldanaerobacter subterraneus subsp. tengcongensis (strain DSM 15242 / JCM 11007 / NBRC 100824 / MB4) (Thermoanaerobacter tengcongensis).